The sequence spans 221 residues: Peptide methionine sulfoxide reductase MsrA (221 aa).

Residue cysteine 54 is part of the active site.

It belongs to the MsrA Met sulfoxide reductase family.

The catalysed reaction is L-methionyl-[protein] + [thioredoxin]-disulfide + H2O = L-methionyl-(S)-S-oxide-[protein] + [thioredoxin]-dithiol. It catalyses the reaction [thioredoxin]-disulfide + L-methionine + H2O = L-methionine (S)-S-oxide + [thioredoxin]-dithiol. In terms of biological role, has an important function as a repair enzyme for proteins that have been inactivated by oxidation. Catalyzes the reversible oxidation-reduction of methionine sulfoxide in proteins to methionine. This Methylobacterium nodulans (strain LMG 21967 / CNCM I-2342 / ORS 2060) protein is Peptide methionine sulfoxide reductase MsrA.